Reading from the N-terminus, the 223-residue chain is Cytochrome c biogenesis ATP-binding export protein CcmA (223 aa).

The region spanning 1-223 (MRSLACERDE…KSDMAVGNDY (223 aa)) is the ABC transporter domain. 31 to 38 (GSNGAGKT) contacts ATP.

It belongs to the ABC transporter superfamily. CcmA exporter (TC 3.A.1.107) family. In terms of assembly, the complex is composed of two ATP-binding proteins (CcmA) and two transmembrane proteins (CcmB).

The protein localises to the cell inner membrane. The enzyme catalyses heme b(in) + ATP + H2O = heme b(out) + ADP + phosphate + H(+). Functionally, part of the ABC transporter complex CcmAB involved in the biogenesis of c-type cytochromes; once thought to export heme, this seems not to be the case, but its exact role is uncertain. Responsible for energy coupling to the transport system. This is Cytochrome c biogenesis ATP-binding export protein CcmA from Saccharophagus degradans (strain 2-40 / ATCC 43961 / DSM 17024).